Consider the following 223-residue polypeptide: 7-cyano-7-deazaguanine synthase (223 aa).

An ATP-binding site is contributed by 10–20 (FSGGQDSTTCL). Zn(2+) is bound by residues cysteine 188, cysteine 197, cysteine 200, and cysteine 203.

This sequence belongs to the QueC family. Zn(2+) is required as a cofactor.

The enzyme catalyses 7-carboxy-7-deazaguanine + NH4(+) + ATP = 7-cyano-7-deazaguanine + ADP + phosphate + H2O + H(+). It participates in purine metabolism; 7-cyano-7-deazaguanine biosynthesis. Catalyzes the ATP-dependent conversion of 7-carboxy-7-deazaguanine (CDG) to 7-cyano-7-deazaguanine (preQ(0)). In Phocaeicola vulgatus (strain ATCC 8482 / DSM 1447 / JCM 5826 / CCUG 4940 / NBRC 14291 / NCTC 11154) (Bacteroides vulgatus), this protein is 7-cyano-7-deazaguanine synthase.